The following is a 292-amino-acid chain: Ribosomal RNA small subunit methyltransferase A (292 aa).

The S-adenosyl-L-methionine site is built by asparagine 28, leucine 30, glycine 55, glutamate 77, aspartate 103, and asparagine 123.

This sequence belongs to the class I-like SAM-binding methyltransferase superfamily. rRNA adenine N(6)-methyltransferase family. RsmA subfamily.

Its subcellular location is the cytoplasm. The enzyme catalyses adenosine(1518)/adenosine(1519) in 16S rRNA + 4 S-adenosyl-L-methionine = N(6)-dimethyladenosine(1518)/N(6)-dimethyladenosine(1519) in 16S rRNA + 4 S-adenosyl-L-homocysteine + 4 H(+). Its function is as follows. Specifically dimethylates two adjacent adenosines (A1518 and A1519) in the loop of a conserved hairpin near the 3'-end of 16S rRNA in the 30S particle. May play a critical role in biogenesis of 30S subunits. This chain is Ribosomal RNA small subunit methyltransferase A, found in Methylobacterium radiotolerans (strain ATCC 27329 / DSM 1819 / JCM 2831 / NBRC 15690 / NCIMB 10815 / 0-1).